A 185-amino-acid polypeptide reads, in one-letter code: Pyruvate/ketoisovalerate oxidoreductases common subunit gamma (185 aa).

Heterotetramer of one alpha, one beta, one delta and one gamma chain.

It catalyses the reaction 2 oxidized [2Fe-2S]-[ferredoxin] + pyruvate + CoA = 2 reduced [2Fe-2S]-[ferredoxin] + acetyl-CoA + CO2 + H(+). The catalysed reaction is 3-methyl-2-oxobutanoate + 2 oxidized [2Fe-2S]-[ferredoxin] + CoA = 2-methylpropanoyl-CoA + 2 reduced [2Fe-2S]-[ferredoxin] + CO2 + H(+). This chain is Pyruvate/ketoisovalerate oxidoreductases common subunit gamma (porG), found in Thermococcus kodakarensis (strain ATCC BAA-918 / JCM 12380 / KOD1) (Pyrococcus kodakaraensis (strain KOD1)).